The following is a 134-amino-acid chain: MSEKPLLSKDEKRLLKIKNRMSRKRVEFRRQEWFRYKKFNESWRKPRGKHSKLREHLGYRPPVVDAGYRSPAAVRGLHPSGFAEKLVYNVNDLKSINPDREGARIASSVGMRKRKEIEEEADNLGIHVFNRVVK.

The protein belongs to the eukaryotic ribosomal protein eL32 family.

The sequence is that of Large ribosomal subunit protein eL32 (rpl32e) from Picrophilus torridus (strain ATCC 700027 / DSM 9790 / JCM 10055 / NBRC 100828 / KAW 2/3).